The chain runs to 749 residues: Transcription factor RFX3 (749 aa).

The RFX-type winged-helix DNA-binding region spans 183–258 (HLQWLLDNYE…YHYYGIRVKP (76 aa)).

This sequence belongs to the RFX family.

It localises to the nucleus. In terms of biological role, transcription factor required for ciliogenesis and islet cell differentiation during endocrine pancreas development. The protein is Transcription factor RFX3 (rfx3) of Xenopus tropicalis (Western clawed frog).